Reading from the N-terminus, the 423-residue chain is Elongation factor 1-alpha (423 aa).

Residues 5–211 (KEHINLAFIG…DNLEPPEKPT (207 aa)) enclose the tr-type G domain. Residues 14-21 (GHVDHGKS) form a G1 region. Position 14–21 (14–21 (GHVDHGKS)) interacts with GTP. A Mg(2+)-binding site is contributed by Ser21. A G2 region spans residues 60-64 (GVTID). The interval 81–84 (DCPG) is G3. Residues 81–85 (DCPGH) and 136–139 (NKMD) each bind GTP. Residues 136-139 (NKMD) are G4. The tract at residues 175–177 (SAF) is G5.

The protein belongs to the TRAFAC class translation factor GTPase superfamily. Classic translation factor GTPase family. EF-Tu/EF-1A subfamily.

The protein resides in the cytoplasm. It catalyses the reaction GTP + H2O = GDP + phosphate + H(+). GTP hydrolase that promotes the GTP-dependent binding of aminoacyl-tRNA to the A-site of ribosomes during protein biosynthesis. The sequence is that of Elongation factor 1-alpha from Methanopyrus kandleri (strain AV19 / DSM 6324 / JCM 9639 / NBRC 100938).